Reading from the N-terminus, the 218-residue chain is Glutathione S-transferase-like protein OpS6 (218 aa).

Positions 5-86 (QPIKLYAHKK…YLIEQYDKDG (82 aa)) constitute a GST N-terminal domain. The GST C-terminal domain maps to 92–218 (SLQDKSLARA…KIAATKAALA (127 aa)).

It belongs to the GST superfamily.

The protein operates within secondary metabolite biosynthesis. Functionally, glutathione S-transferase-like protein; part of the gene cluster that mediates the biosynthesis of the bibenzoquinone oosporein, a metabolite required for fungal virulence that acts by evading host immunity to facilitate fungal multiplication in insects. The non-reducing polyketide synthase OpS1 produces orsellinic acid by condensing acetyl-CoA with 3 malonyl-CoA units. Orsellinic acid is then hydroxylated to benzenetriol by the hydroxylase OpS4. The intermediate is oxidized either nonenzymatically to 5,5'-dideoxy-oosporein or enzymatically to benzenetetrol by the oxidoreductase OpS7. The latter is further dimerized to oosporein by the catalase OpS5. OpS6 probably functions en route for protecting cells against oxidative stress by scavenging any leaked free radical form of benzenetetrol by activating the thiol group of glutathione. The chain is Glutathione S-transferase-like protein OpS6 from Beauveria bassiana (strain ARSEF 2860) (White muscardine disease fungus).